The chain runs to 162 residues: Protein archease (162 aa).

The Ca(2+) site is built by Asp34, Asp161, and Ile162.

Belongs to the archease family. As to quaternary structure, component of the tRNA-splicing ligase complex.

Its function is as follows. Component of the tRNA-splicing ligase complex required to facilitate the enzymatic turnover of catalytic subunit RTCB. Together with ddx1, acts by facilitating the guanylylation of RTCB, a key intermediate step in tRNA ligation. In Ictalurus punctatus (Channel catfish), this protein is Protein archease.